The following is a 260-amino-acid chain: 4-hydroxy-tetrahydrodipicolinate reductase (260 aa).

NAD(+) is bound by residues 12–17, 92–94, and 118–121; these read GFRGKM, GTT, and APNF. Catalysis depends on H148, which acts as the Proton donor/acceptor. H149 serves as a coordination point for (S)-2,3,4,5-tetrahydrodipicolinate. K152 acts as the Proton donor in catalysis. 158–159 is a binding site for (S)-2,3,4,5-tetrahydrodipicolinate; sequence GT.

Belongs to the DapB family.

Its subcellular location is the cytoplasm. The catalysed reaction is (S)-2,3,4,5-tetrahydrodipicolinate + NAD(+) + H2O = (2S,4S)-4-hydroxy-2,3,4,5-tetrahydrodipicolinate + NADH + H(+). It carries out the reaction (S)-2,3,4,5-tetrahydrodipicolinate + NADP(+) + H2O = (2S,4S)-4-hydroxy-2,3,4,5-tetrahydrodipicolinate + NADPH + H(+). It functions in the pathway amino-acid biosynthesis; L-lysine biosynthesis via DAP pathway; (S)-tetrahydrodipicolinate from L-aspartate: step 4/4. Catalyzes the conversion of 4-hydroxy-tetrahydrodipicolinate (HTPA) to tetrahydrodipicolinate. This is 4-hydroxy-tetrahydrodipicolinate reductase from Lactococcus lactis subsp. cremoris (strain SK11).